The following is a 98-amino-acid chain: NADH-ubiquinone oxidoreductase chain 4L (98 aa).

3 helical membrane passes run 1 to 21, 29 to 49, and 61 to 81; these read MTMVYANIFLAFIMSLMGLLM, SLLCLEGMMLSLFVMMTVTIL, and IILLVFAACEAALGLSLLVMV.

This sequence belongs to the complex I subunit 4L family. In terms of assembly, core subunit of respiratory chain NADH dehydrogenase (Complex I) which is composed of 45 different subunits.

It localises to the mitochondrion inner membrane. The enzyme catalyses a ubiquinone + NADH + 5 H(+)(in) = a ubiquinol + NAD(+) + 4 H(+)(out). In terms of biological role, core subunit of the mitochondrial membrane respiratory chain NADH dehydrogenase (Complex I) which catalyzes electron transfer from NADH through the respiratory chain, using ubiquinone as an electron acceptor. Part of the enzyme membrane arm which is embedded in the lipid bilayer and involved in proton translocation. The protein is NADH-ubiquinone oxidoreductase chain 4L (MT-ND4L) of Mirounga angustirostris (Northern elephant seal).